The primary structure comprises 1342 residues: DNA-directed RNA polymerase subunit beta (1342 aa).

The protein belongs to the RNA polymerase beta chain family. The RNAP catalytic core consists of 2 alpha, 1 beta, 1 beta' and 1 omega subunit. When a sigma factor is associated with the core the holoenzyme is formed, which can initiate transcription.

The enzyme catalyses RNA(n) + a ribonucleoside 5'-triphosphate = RNA(n+1) + diphosphate. DNA-dependent RNA polymerase catalyzes the transcription of DNA into RNA using the four ribonucleoside triphosphates as substrates. In Blochmanniella floridana, this protein is DNA-directed RNA polymerase subunit beta.